Here is a 325-residue protein sequence, read N- to C-terminus: Protease HtpX homolog 2 (325 aa).

Helical transmembrane passes span 17–37 (IAIL…FFGF) and 42–62 (LLIT…WLFG). Residue His-146 participates in Zn(2+) binding. Glu-147 is an active-site residue. Residue His-150 coordinates Zn(2+). 2 consecutive transmembrane segments (helical) span residues 158–178 (LLLA…GLWW) and 195–215 (ILFL…LFVL). Residue Glu-222 participates in Zn(2+) binding.

The protein belongs to the peptidase M48B family. Zn(2+) is required as a cofactor.

Its subcellular location is the cell membrane. In Sulfurisphaera tokodaii (strain DSM 16993 / JCM 10545 / NBRC 100140 / 7) (Sulfolobus tokodaii), this protein is Protease HtpX homolog 2.